A 305-amino-acid polypeptide reads, in one-letter code: UDP-3-O-acyl-N-acetylglucosamine deacetylase (305 aa).

Zn(2+) is bound by residues His-78, His-237, and Asp-241. His-264 functions as the Proton donor in the catalytic mechanism.

It belongs to the LpxC family. The cofactor is Zn(2+).

It catalyses the reaction a UDP-3-O-[(3R)-3-hydroxyacyl]-N-acetyl-alpha-D-glucosamine + H2O = a UDP-3-O-[(3R)-3-hydroxyacyl]-alpha-D-glucosamine + acetate. It participates in glycolipid biosynthesis; lipid IV(A) biosynthesis; lipid IV(A) from (3R)-3-hydroxytetradecanoyl-[acyl-carrier-protein] and UDP-N-acetyl-alpha-D-glucosamine: step 2/6. Catalyzes the hydrolysis of UDP-3-O-myristoyl-N-acetylglucosamine to form UDP-3-O-myristoylglucosamine and acetate, the committed step in lipid A biosynthesis. This chain is UDP-3-O-acyl-N-acetylglucosamine deacetylase, found in Burkholderia cenocepacia (strain HI2424).